The primary structure comprises 178 residues: Nucleoside-triphosphatase THEP1 (178 aa).

Residues 9–16 (GPVGSIKA) and 101–108 (VIIIDEVG) each bind ATP.

The protein belongs to the THEP1 NTPase family.

It catalyses the reaction a ribonucleoside 5'-triphosphate + H2O = a ribonucleoside 5'-diphosphate + phosphate + H(+). Has nucleotide phosphatase activity towards ATP, GTP, CTP, TTP and UTP. May hydrolyze nucleoside diphosphates with lower efficiency. The sequence is that of Nucleoside-triphosphatase THEP1 from Thermoplasma volcanium (strain ATCC 51530 / DSM 4299 / JCM 9571 / NBRC 15438 / GSS1).